The sequence spans 250 residues: Small ribosomal subunit protein uS2 (250 aa).

It belongs to the universal ribosomal protein uS2 family.

The chain is Small ribosomal subunit protein uS2 from Teredinibacter turnerae (strain ATCC 39867 / T7901).